The chain runs to 839 residues: MPQLDVDKTIEELRLGEKIDLVSGIDFWHTASVPRLNIPSLRMSDGPNGVRGTRFFNGVPAACFPCATALGATWDTELLHKVGHLMGEEAIAKGAHVILGPTINTQRSPLGGRGFESFAEDGVLAGHLAGYCSKGIQEKGVAACLKHFVCNDQEHERLAVDSIVTDRATREIYLLPFQIAMRICKTATVMTAYNKINGTHVSENKKYITDILRKEWGWDGLVMSDWFGTYSCTSESIIAGLDIEMPGKTRWRGDALAHAVSSNKVHEFVLDERVRNVLNLVNYVEPLGIPENAEEKVLNRPEDQALLRRAAAESIVLLKNEDNILPFNKEKSIAVIGPNAKIAAYCGGGSASLDAYYTITPFEGVSAQSKGEVHFAQGSYSYKDLPLIGHLLKTDDGKTGFKFRVYDEPASSSNRELLHELHLVSSQGFLMDYRHPKIKSYLYYVDMEGYFTPEESGVYDFGVVVVGTGKLLVDDEVVVDNTKNQRLGSAFFGNGTVEEKGSKELMAGQKYKITFQFGTAPTSDIDTRGVVIFGPGGFRFGAARRQTQEELISKAVEVASKADQVVVFAGLTSEWETEGYDRPDMDLPPGSDELISKILEVKPNAAIVIQSGTPVTMPWAPKAKALLQAWFGGNECGNGIADVLYGNVNPSGKLPLTFPVRLQDNPSYLNFRSERGRVLYGEDIYVGYRYYEKAQLPPLFPFGHGLSYTTFTREKLELNTSPEKDKLQDGEPITARVTVTNTGKVAGAETVQLWVVPPPTEVNRPVRELKGFAKVHLEPGESKDVEIVVEKKLATSWWDEKREAWASEKGVYWVQVTGTGEGVLTAEFEVKKTRFWTGL.

The N-linked (GlcNAc...) asparagine glycan is linked to asparagine 197. Residue aspartate 225 is part of the active site. Residues 396 to 556 (DGKTGFKFRV…TQEELISKAV (161 aa)) enclose the PA14 domain. An N-linked (GlcNAc...) asparagine glycan is attached at asparagine 494.

This sequence belongs to the glycosyl hydrolase 3 family.

The protein resides in the secreted. The catalysed reaction is Hydrolysis of terminal, non-reducing beta-D-glucosyl residues with release of beta-D-glucose.. The protein operates within glycan metabolism; cellulose degradation. Beta-glucosidases are one of a number of cellulolytic enzymes, and catalyze the last step releasing glucose from the inhibitory cellobiose. In Emericella nidulans (strain FGSC A4 / ATCC 38163 / CBS 112.46 / NRRL 194 / M139) (Aspergillus nidulans), this protein is Probable beta-glucosidase I (bglI).